A 691-amino-acid chain; its full sequence is Two-component response regulator ORR21 (691 aa).

A Response regulatory domain is found at 17–132 (KVLVVDDDPT…ELKNIWQHVI (116 aa)). A 4-aspartylphosphate modification is found at aspartate 68. Over residues 139 to 155 (NKEHEHSGSLDDTDRTR) the composition is skewed to basic and acidic residues. Disordered regions lie at residues 139-204 (NKEH…KKPR) and 616-647 (SHPGSSSSSFQSSNVALGKLPDQGRGKNHGFV). Residues 199–258 (TSKKPRVVWSVELHQQFVNAVNHLGIDKAVPKKILELMNVPGLTRENVASHLQKFRLYLK) constitute a DNA-binding region (myb-like GARP). A compositionally biased stretch (low complexity) spans 616–628 (SHPGSSSSSFQSS).

It belongs to the ARR family. Type-B subfamily. Post-translationally, two-component system major event consists of a His-to-Asp phosphorelay between a sensor histidine kinase (HK) and a response regulator (RR). In plants, the His-to-Asp phosphorelay involves an additional intermediate named Histidine-containing phosphotransfer protein (HPt). This multistep phosphorelay consists of a His-Asp-His-Asp sequential transfer of a phosphate group between first a His and an Asp of the HK protein, followed by the transfer to a conserved His of the HPt protein and finally the transfer to an Asp in the receiver domain of the RR protein.

The protein localises to the nucleus. Transcriptional activator that binds specific DNA sequence. Functions as a response regulator involved in His-to-Asp phosphorelay signal transduction system. Phosphorylation of the Asp residue in the receiver domain activates the ability of the protein to promote the transcription of target genes. May directly activate some type-A response regulators in response to cytokinins. This Oryza sativa subsp. indica (Rice) protein is Two-component response regulator ORR21.